Reading from the N-terminus, the 227-residue chain is Esterase OVCA2 (227 aa).

Residues Ser-119, Asp-179, and His-206 each act as charge relay system in the active site.

It belongs to the LovG family.

The enzyme catalyses a carboxylic ester + H2O = an alcohol + a carboxylate + H(+). In terms of biological role, exhibits ester hydrolase activity with a strong preference for long-chain alkyl ester substrates and high selectivity against a variety of short, branched, and substituted esters. Is able to hydrolyze ester bonds within a wide range of p-nitrophenyl derivatives (C2-C14) in vitro, with a strong preference toward substrates of &gt;8 carbons. This is Esterase OVCA2 (OVCA2) from Bos taurus (Bovine).